A 301-amino-acid polypeptide reads, in one-letter code: NAD kinase (301 aa).

Catalysis depends on Asp-81, which acts as the Proton acceptor. Residues 81-82 (DG), 155-156 (NE), His-166, Arg-183, Asp-185, 196-201 (TAYSLS), and Gln-256 contribute to the NAD(+) site.

This sequence belongs to the NAD kinase family. A divalent metal cation serves as cofactor.

Its subcellular location is the cytoplasm. The catalysed reaction is NAD(+) + ATP = ADP + NADP(+) + H(+). Its function is as follows. Involved in the regulation of the intracellular balance of NAD and NADP, and is a key enzyme in the biosynthesis of NADP. Catalyzes specifically the phosphorylation on 2'-hydroxyl of the adenosine moiety of NAD to yield NADP. The protein is NAD kinase of Mannheimia succiniciproducens (strain KCTC 0769BP / MBEL55E).